The sequence spans 355 residues: DNA polymerase IV (355 aa).

In terms of domain architecture, UmuC spans 7 to 188 (IIHIDMDCFY…LPVRKLFGVG (182 aa)). Residues Asp-11 and Asp-106 each coordinate Mg(2+). The active site involves Glu-107.

This sequence belongs to the DNA polymerase type-Y family. Monomer. Requires Mg(2+) as cofactor.

It localises to the cytoplasm. The catalysed reaction is DNA(n) + a 2'-deoxyribonucleoside 5'-triphosphate = DNA(n+1) + diphosphate. Functionally, poorly processive, error-prone DNA polymerase involved in untargeted mutagenesis. Copies undamaged DNA at stalled replication forks, which arise in vivo from mismatched or misaligned primer ends. These misaligned primers can be extended by PolIV. Exhibits no 3'-5' exonuclease (proofreading) activity. May be involved in translesional synthesis, in conjunction with the beta clamp from PolIII. This chain is DNA polymerase IV, found in Legionella pneumophila subsp. pneumophila (strain Philadelphia 1 / ATCC 33152 / DSM 7513).